Here is a 134-residue protein sequence, read N- to C-terminus: Protein PsiE homolog (134 aa).

4 helical membrane-spanning segments follow: residues leucine 14–isoleucine 34, valine 56–phenylalanine 76, phenylalanine 82–serine 102, and proline 106–serine 126.

The protein belongs to the PsiE family.

Its subcellular location is the cell membrane. This chain is Protein PsiE homolog, found in Bacillus anthracis.